The sequence spans 180 residues: Shikimate kinase (180 aa).

Position 14 to 19 (14 to 19 (GAGKSC)) interacts with ATP. Mg(2+) is bound at residue Ser18. Substrate contacts are provided by Asp36, Arg60, and Gly82. Arg120 lines the ATP pocket. Substrate is bound at residue Arg139.

It belongs to the shikimate kinase family. Monomer. Requires Mg(2+) as cofactor.

It is found in the cytoplasm. It catalyses the reaction shikimate + ATP = 3-phosphoshikimate + ADP + H(+). It participates in metabolic intermediate biosynthesis; chorismate biosynthesis; chorismate from D-erythrose 4-phosphate and phosphoenolpyruvate: step 5/7. Its function is as follows. Catalyzes the specific phosphorylation of the 3-hydroxyl group of shikimic acid using ATP as a cosubstrate. The sequence is that of Shikimate kinase from Xanthomonas campestris pv. campestris (strain 8004).